The following is a 308-amino-acid chain: D-alanine--D-alanine ligase (308 aa).

Residues 103–302 (KTVMKTAGVP…FDELVQWMVE (200 aa)) enclose the ATP-grasp domain. 130-184 (MEPPYVIKPVADGSSVGVYIITEQHQHPPQELFRDDWAYGDKLLVEKYVAGKELT) contributes to the ATP binding site. Asp-252, Glu-269, and Asn-271 together coordinate Mg(2+).

Belongs to the D-alanine--D-alanine ligase family. The cofactor is Mg(2+). It depends on Mn(2+) as a cofactor.

It is found in the cytoplasm. The enzyme catalyses 2 D-alanine + ATP = D-alanyl-D-alanine + ADP + phosphate + H(+). It functions in the pathway cell wall biogenesis; peptidoglycan biosynthesis. Its function is as follows. Cell wall formation. The protein is D-alanine--D-alanine ligase of Rhodopseudomonas palustris (strain BisA53).